Consider the following 340-residue polypeptide: Extracellular matrix protein-binding protein emp (340 aa).

A signal peptide spans 1-26; the sequence is MKKKLLVLTMSTLFATQLINSNHANA.

Its subcellular location is the cell surface. Functionally, adhesin that binds to the host cell extracellular matrix proteins fibronectin, fibrinogen, collagen, and vitronectin. The sequence is that of Extracellular matrix protein-binding protein emp (emp) from Staphylococcus aureus.